A 111-amino-acid polypeptide reads, in one-letter code: Ribonuclease P protein component (111 aa).

The protein belongs to the RnpA family. As to quaternary structure, consists of a catalytic RNA component (M1 or rnpB) and a protein subunit.

The catalysed reaction is Endonucleolytic cleavage of RNA, removing 5'-extranucleotides from tRNA precursor.. In terms of biological role, RNaseP catalyzes the removal of the 5'-leader sequence from pre-tRNA to produce the mature 5'-terminus. It can also cleave other RNA substrates such as 4.5S RNA. The protein component plays an auxiliary but essential role in vivo by binding to the 5'-leader sequence and broadening the substrate specificity of the ribozyme. In Clostridium botulinum (strain Loch Maree / Type A3), this protein is Ribonuclease P protein component.